A 477-amino-acid polypeptide reads, in one-letter code: RTX-III toxin determinant D (477 aa).

The Cytoplasmic portion of the chain corresponds to 1-59 (MKLWILGLGEFFQRYRNIWREIWKIRKQLDTPARQKDENEFLPRHLELIETPISKKPRL). The chain crosses the membrane as a helical span at residues 60 to 77 (IAYLIMLFLFLAIVISII). Residues 78–477 (SKVEIVASAT…ESITESLRER (400 aa)) lie on the Periplasmic side of the membrane.

The protein belongs to the membrane fusion protein (MFP) (TC 8.A.1) family.

The protein resides in the cell inner membrane. Functionally, involved in the transport of the toxin RTX-III. This chain is RTX-III toxin determinant D (apxIIID), found in Actinobacillus pleuropneumoniae (Haemophilus pleuropneumoniae).